Reading from the N-terminus, the 204-residue chain is Abscisic acid receptor PYL3 (204 aa).

The tract at residues 40-191 is START-like; the sequence is HEPRDHQCSS…NLKSLAEVSE (152 aa). Residues C47 and C172 are joined by a disulfide bond. Abscisate-binding positions include K76, 104–109, 131–137, and E156; these read ATRSTE and RLKNYSS. Residues 100-104 carry the Gate loop motif; the sequence is SGLPA. Positions 130 to 132 match the Latch loop motif; the sequence is HRL.

The protein belongs to the PYR/PYL/RCAR abscisic acid intracellular receptor family. Monomer. Interacts with PP2C50. Binding to PP2C50 is dependent on the presence of abscisic acid (ABA). Interacts with PP2C30 and PP2C53.

The protein resides in the cytoplasm. The protein localises to the cytosol. It localises to the nucleus. In terms of biological role, involved in abscisic acid (ABA) signaling during seed germination and abiotic stress response. Acts as a positive regulator of ABA-mediated inhibition of seed germination, and tolerance to drought and cold stresses. Together with PP2C50 and SAPK10, may form an ABA signaling module involved in stress response. Inhibits the protein phosphatases PP2C06 and PP2C09 when activated by abscisic acid (ABA). The chain is Abscisic acid receptor PYL3 from Oryza sativa subsp. japonica (Rice).